We begin with the raw amino-acid sequence, 281 residues long: 3-deoxy-manno-octulosonate cytidylyltransferase (281 aa).

Belongs to the KdsB family.

It is found in the cytoplasm. The catalysed reaction is 3-deoxy-alpha-D-manno-oct-2-ulosonate + CTP = CMP-3-deoxy-beta-D-manno-octulosonate + diphosphate. It participates in nucleotide-sugar biosynthesis; CMP-3-deoxy-D-manno-octulosonate biosynthesis; CMP-3-deoxy-D-manno-octulosonate from 3-deoxy-D-manno-octulosonate and CTP: step 1/1. It functions in the pathway bacterial outer membrane biogenesis; lipopolysaccharide biosynthesis. Functionally, activates KDO (a required 8-carbon sugar) for incorporation into bacterial lipopolysaccharide in Gram-negative bacteria. In Xanthomonas campestris pv. campestris (strain B100), this protein is 3-deoxy-manno-octulosonate cytidylyltransferase.